The primary structure comprises 671 residues: Fusexin 1 (671 aa).

Residues 1-12 (MRAVSDFLKNKW) are Cytoplasmic-facing. A helical transmembrane segment spans residues 13–33 (VAVPAVALLILSLGFLAQNYI). The Extracellular segment spans residues 34–574 (TGSFVSGDQI…DPFCADGPLE (541 aa)). Cystine bridges form between C145/C180, C409/C452, C480/C500, and C513/C528. The interval 168–173 (GAIADY) is fusion loop. A helical membrane pass occupies residues 575-595 (MLSKMFHLVAGTAVAFFTGSL). Residues 596–628 (GYRAGRWVDGEYQIKGGFDPLKSRSVSRAKRGR) are Cytoplasmic-facing. Residues 629–649 (FLIGLIAELVSFLLGFYVILL) traverse the membrane as a helical segment. A topological domain (extracellular) is located at residue V650. The chain crosses the membrane as a helical span at residues 651-671 (PIWAQLMVILGYVLFKYYTPF).

Belongs to the HAP2/GCS1 family. Fusexin 1 subfamily. As to quaternary structure, homotrimer stabilized by interdomain contacts and numerous Ca(2+) and Na(+) ions.

The protein localises to the cell surface. It localises to the cell membrane. Exhibits fusogenic activity. Mediates cell-cell fusion in mammalian cells (bilateral fusion). The protein is Fusexin 1 of Natrinema altunense (strain JCM 12890 / CGMCC 1.3731 / AJ2).